Consider the following 1590-residue polypeptide: Pentafunctional AROM polypeptide (1590 aa).

The interval 1 to 387 is 3-dehydroquinate synthase; it reads MGSTTFENPT…YEPKASVVED (387 aa). NAD(+)-binding positions include 49–51, 86–89, 117–119, and Asp122; these read DTN, ENSK, and GGV. Arg133 lines the 7-phospho-2-dehydro-3-deoxy-D-arabino-heptonate pocket. 142-143 serves as a coordination point for NAD(+); it reads TT. Asp149 and Lys155 together coordinate 7-phospho-2-dehydro-3-deoxy-D-arabino-heptonate. Position 164 (Lys164) interacts with NAD(+). Residue Asn165 coordinates 7-phospho-2-dehydro-3-deoxy-D-arabino-heptonate. Residues 182-185 and Asn193 contribute to the NAD(+) site; that span reads FLET. Glu197 contacts Zn(2+). Residues 197-200 and Lys253 each bind 7-phospho-2-dehydro-3-deoxy-D-arabino-heptonate; that span reads EVVK. Glu263 serves as the catalytic Proton acceptor; for 3-dehydroquinate synthase activity. Residues 267–271 and His274 contribute to the 7-phospho-2-dehydro-3-deoxy-D-arabino-heptonate site; that span reads RNILN. A Zn(2+)-binding site is contributed by His274. His278 (proton acceptor; for 3-dehydroquinate synthase activity) is an active-site residue. The 7-phospho-2-dehydro-3-deoxy-D-arabino-heptonate site is built by His290 and Lys359. His290 lines the Zn(2+) pocket. Residues 400-841 are EPSP synthase; that stretch reads VRPSVPETLN…WDILSKSFQV (442 aa). The For EPSP synthase activity role is filled by Cys823. The interval 863–1055 is shikimate kinase; it reads DKSIFIIGMR…RNKPQSFFVS (193 aa). Position 870-877 (870-877) interacts with ATP; sequence GMRGAGKT. The interval 1056 to 1276 is 3-dehydroquinase; that stretch reads LTMPDISGAA…AAPGQLSAAE (221 aa). Catalysis depends on His1179, which acts as the Proton acceptor; for 3-dehydroquinate dehydratase activity. The active-site Schiff-base intermediate with substrate; for 3-dehydroquinate dehydratase activity is Lys1207. The interval 1289–1590 is shikimate dehydrogenase; sequence PKSFYLFGTP…KMDKHPTFVC (302 aa).

It in the N-terminal section; belongs to the sugar phosphate cyclases superfamily. Dehydroquinate synthase family. This sequence in the 2nd section; belongs to the EPSP synthase family. The protein in the 3rd section; belongs to the shikimate kinase family. In the 4th section; belongs to the type-I 3-dehydroquinase family. It in the C-terminal section; belongs to the shikimate dehydrogenase family. Homodimer. Requires Zn(2+) as cofactor.

It is found in the cytoplasm. The enzyme catalyses 7-phospho-2-dehydro-3-deoxy-D-arabino-heptonate = 3-dehydroquinate + phosphate. The catalysed reaction is 3-dehydroquinate = 3-dehydroshikimate + H2O. It catalyses the reaction shikimate + NADP(+) = 3-dehydroshikimate + NADPH + H(+). It carries out the reaction shikimate + ATP = 3-phosphoshikimate + ADP + H(+). The enzyme catalyses 3-phosphoshikimate + phosphoenolpyruvate = 5-O-(1-carboxyvinyl)-3-phosphoshikimate + phosphate. It functions in the pathway metabolic intermediate biosynthesis; chorismate biosynthesis; chorismate from D-erythrose 4-phosphate and phosphoenolpyruvate: step 2/7. Its pathway is metabolic intermediate biosynthesis; chorismate biosynthesis; chorismate from D-erythrose 4-phosphate and phosphoenolpyruvate: step 3/7. The protein operates within metabolic intermediate biosynthesis; chorismate biosynthesis; chorismate from D-erythrose 4-phosphate and phosphoenolpyruvate: step 4/7. It participates in metabolic intermediate biosynthesis; chorismate biosynthesis; chorismate from D-erythrose 4-phosphate and phosphoenolpyruvate: step 5/7. It functions in the pathway metabolic intermediate biosynthesis; chorismate biosynthesis; chorismate from D-erythrose 4-phosphate and phosphoenolpyruvate: step 6/7. In terms of biological role, the AROM polypeptide catalyzes 5 consecutive enzymatic reactions in prechorismate polyaromatic amino acid biosynthesis. This Sclerotinia sclerotiorum (White mold) protein is Pentafunctional AROM polypeptide.